A 690-amino-acid chain; its full sequence is Proprotein convertase subtilisin/kexin type 9 (690 aa).

Residues 1–28 (MGTVSSRRLWWPLPLLLLLLLGPTGTRA) form the signal peptide. Positions 29-150 (QEEDDDDYEE…IEEDSSVFAQ (122 aa)) are excised as a propeptide. Tyrosine 36 is modified (sulfotyrosine). Serine 45 is subject to Phosphoserine. Positions 75-147 (TYVVVLKEET…VDYIEEDSSV (73 aa)) constitute an Inhibitor I9 domain. Residues 153–459 (PWNLERITPA…GWQLFCRTVW (307 aa)) enclose the Peptidase S8 domain. Active-site charge relay system residues include aspartate 184 and histidine 224. 2 cysteine pairs are disulfide-bonded: cysteine 221–cysteine 253 and cysteine 321–cysteine 356. The active-site Charge relay system is serine 384. The segment at 448 to 690 (GAGWQLFCRT…HLAQASQELQ (243 aa)) is C-terminal domain. 3 disulfide bridges follow: cysteine 455–cysteine 525, cysteine 475–cysteine 524, and cysteine 484–cysteine 507. Asparagine 531 is a glycosylation site (N-linked (GlcNAc...) asparagine). 6 cysteine pairs are disulfide-bonded: cysteine 532/cysteine 599, cysteine 550/cysteine 598, cysteine 560/cysteine 586, cysteine 606/cysteine 677, cysteine 624/cysteine 676, and cysteine 633/cysteine 652. Residue serine 686 is modified to Phosphoserine.

This sequence belongs to the peptidase S8 family. In terms of assembly, monomer. Can self-associate to form dimers and higher multimers which may have increased LDLR degrading activity. The precursor protein but not the mature protein may form multimers. Interacts with APOB, VLDLR, LRP8/APOER2 and BACE1. The full-length immature form (pro-PCSK9) interacts with SCNN1A, SCNN1B and SCNN1G. The pro-PCSK9 form (via C-terminal domain) interacts with LDLR. Interacts (via the C-terminal domain) with ANXA2 (via repeat Annexin 1); the interaction inhibits the degradation of LDLR. Ca(2+) is required as a cofactor. Cleavage by furin and PCSK5 generates a truncated inactive protein that is unable to induce LDLR degradation. Post-translationally, undergoes autocatalytic cleavage in the endoplasmic reticulum to release the propeptide from the N-terminus and the cleavage of the propeptide is strictly required for its maturation and activation. The cleaved propeptide however remains associated with the catalytic domain through non-covalent interactions, preventing potential substrates from accessing its active site. As a result, it is secreted from cells as a propeptide-containing, enzymatically inactive protein. In terms of processing, phosphorylation protects the propeptide against proteolysis.

It localises to the cytoplasm. Its subcellular location is the secreted. The protein resides in the endosome. The protein localises to the lysosome. It is found in the cell surface. It localises to the endoplasmic reticulum. Its subcellular location is the golgi apparatus. Its activity is regulated as follows. Its proteolytic activity is autoinhibited by the non-covalent binding of the propeptide to the catalytic domain. Inhibited by EGTA. Its function is as follows. Crucial player in the regulation of plasma cholesterol homeostasis. Binds to low-density lipid receptor family members: low density lipoprotein receptor (LDLR), very low density lipoprotein receptor (VLDLR), apolipoprotein E receptor (LRP1/APOER) and apolipoprotein receptor 2 (LRP8/APOER2), and promotes their degradation in intracellular acidic compartments. Acts via a non-proteolytic mechanism to enhance the degradation of the hepatic LDLR through a clathrin LDLRAP1/ARH-mediated pathway. May prevent the recycling of LDLR from endosomes to the cell surface or direct it to lysosomes for degradation. Can induce ubiquitination of LDLR leading to its subsequent degradation. Inhibits intracellular degradation of APOB via the autophagosome/lysosome pathway in a LDLR-independent manner. Involved in the disposal of non-acetylated intermediates of BACE1 in the early secretory pathway. Inhibits epithelial Na(+) channel (ENaC)-mediated Na(+) absorption by reducing ENaC surface expression primarily by increasing its proteasomal degradation. Regulates neuronal apoptosis via modulation of LRP8/APOER2 levels and related anti-apoptotic signaling pathways. The protein is Proprotein convertase subtilisin/kexin type 9 (PCSK9) of Callithrix jacchus (White-tufted-ear marmoset).